The sequence spans 865 residues: MIKAIIGKIIGTRNDRWIKQYKKQVLTINALEPTYEKMSDDELQNAFEELKKRVRSTEKDLQEKTLLEVLPESFAITREASKRILKMCHFDVQLIGGMVLNDGKIAEMKTGEGKTLVATLAVALNALKGESVYVVTVNDYLAHRDSKEMEPLYHFLGYSVGTITASVRDDDERLEIYSKDIVYGTNNEFGFDYLRDNMKYSLEHKVQKSHAFAIVDEVDSILIDEARTPLIISGPVDRRMENYNKADEVAKSMQVEIDFTIDEKNRAILITEEGIKKAENLFGVDNLYKIENAALSHHLDQALKANYLFFIDKDYIVANNEVVIVDEFTGRLSEGRRFSEGLHQALEAKEGVSIKEESQTLADITFQNYFRMFSKLAGMTGTAQTEATEFLEIYNLEVVSIPTNLAIKRKDLNDLIYKSEKEKFDAVILKIKELHDKGQPVLVGTASIEKSETLHALLKKERIPHTVLNAKQHTKEAEIIKDAGLKGAVTIATNMAGRGVDIKLTDEIKELGGLYIIGTERHESRRIDNQLRGRSGRQGDPGTSQFYLSLEDNLLRIFGSDRIKGVMEKLGLKDGEHIESKLVTRAVENAQKKVENLHFESRKHLLEYDDVANEQRKSVYKFRDELLDVNYDISAKIAENREYALNQIFSKLKAFDHQNLSEEELLGLKNILKEDFNAHVSLEDLKKASPIENFVAEKLKSDYENKMKVLDSEQRSRIERIVYLQILDNAWREHLYTMDNLKTGINLRGYNQKDPLVEYKKESYNLFLEFIEDIKTEAIKTFSKIQFENEQDSSDAERYLDNFSEEREHESVTYRHEEALDEDLNVAMKAFAKTPKRNEPCPCQSGKKYKDCCAKSGPKKGLFAK.

ATP-binding positions include glutamine 93, 111-115 (GEGKT), and aspartate 501. The Zn(2+) site is built by cysteine 841, cysteine 843, cysteine 852, and cysteine 853.

The protein belongs to the SecA family. Monomer and homodimer. Part of the essential Sec protein translocation apparatus which comprises SecA, SecYEG and auxiliary proteins SecDF-YajC and YidC. The cofactor is Zn(2+).

The protein resides in the cell inner membrane. It is found in the cytoplasm. It carries out the reaction ATP + H2O + cellular proteinSide 1 = ADP + phosphate + cellular proteinSide 2.. Part of the Sec protein translocase complex. Interacts with the SecYEG preprotein conducting channel. Has a central role in coupling the hydrolysis of ATP to the transfer of proteins into and across the cell membrane, serving as an ATP-driven molecular motor driving the stepwise translocation of polypeptide chains across the membrane. This is Protein translocase subunit SecA from Helicobacter pylori (strain ATCC 700392 / 26695) (Campylobacter pylori).